The following is a 187-amino-acid chain: Elongation factor P (187 aa).

The protein belongs to the elongation factor P family.

Its subcellular location is the cytoplasm. The protein operates within protein biosynthesis; polypeptide chain elongation. In terms of biological role, involved in peptide bond synthesis. Stimulates efficient translation and peptide-bond synthesis on native or reconstituted 70S ribosomes in vitro. Probably functions indirectly by altering the affinity of the ribosome for aminoacyl-tRNA, thus increasing their reactivity as acceptors for peptidyl transferase. This is Elongation factor P from Nocardioides sp. (strain ATCC BAA-499 / JS614).